A 300-amino-acid polypeptide reads, in one-letter code: Acetaldehyde dehydrogenase 3 (300 aa).

11 to 14 (SGNI) provides a ligand contact to NAD(+). The active-site Acyl-thioester intermediate is Cys-126. NAD(+)-binding positions include 157-165 (SAGPGTRAN) and Asn-276.

It belongs to the acetaldehyde dehydrogenase family.

It carries out the reaction acetaldehyde + NAD(+) + CoA = acetyl-CoA + NADH + H(+). In Rhodococcus jostii (strain RHA1), this protein is Acetaldehyde dehydrogenase 3 (hsaG).